Here is a 122-residue protein sequence, read N- to C-terminus: UPF0102 protein Dred_2035 (122 aa).

This sequence belongs to the UPF0102 family.

In Desulforamulus reducens (strain ATCC BAA-1160 / DSM 100696 / MI-1) (Desulfotomaculum reducens), this protein is UPF0102 protein Dred_2035.